A 96-amino-acid polypeptide reads, in one-letter code: Putative pterin-4-alpha-carbinolamine dehydratase (96 aa).

It belongs to the pterin-4-alpha-carbinolamine dehydratase family.

It carries out the reaction (4aS,6R)-4a-hydroxy-L-erythro-5,6,7,8-tetrahydrobiopterin = (6R)-L-erythro-6,7-dihydrobiopterin + H2O. The sequence is that of Putative pterin-4-alpha-carbinolamine dehydratase from Caulobacter sp. (strain K31).